Consider the following 524-residue polypeptide: uncharacterized protein (524 aa).

The helical transmembrane segment at 13-33 (EFILLILGMTVVGIVITMGLV) threads the bilayer.

The protein localises to the membrane. This is an uncharacterized protein from Methanocaldococcus jannaschii (strain ATCC 43067 / DSM 2661 / JAL-1 / JCM 10045 / NBRC 100440) (Methanococcus jannaschii).